We begin with the raw amino-acid sequence, 150 residues long: SsrA-binding protein (150 aa).

Belongs to the SmpB family.

It is found in the cytoplasm. Its function is as follows. Required for rescue of stalled ribosomes mediated by trans-translation. Binds to transfer-messenger RNA (tmRNA), required for stable association of tmRNA with ribosomes. tmRNA and SmpB together mimic tRNA shape, replacing the anticodon stem-loop with SmpB. tmRNA is encoded by the ssrA gene; the 2 termini fold to resemble tRNA(Ala) and it encodes a 'tag peptide', a short internal open reading frame. During trans-translation Ala-aminoacylated tmRNA acts like a tRNA, entering the A-site of stalled ribosomes, displacing the stalled mRNA. The ribosome then switches to translate the ORF on the tmRNA; the nascent peptide is terminated with the 'tag peptide' encoded by the tmRNA and targeted for degradation. The ribosome is freed to recommence translation, which seems to be the essential function of trans-translation. In Magnetococcus marinus (strain ATCC BAA-1437 / JCM 17883 / MC-1), this protein is SsrA-binding protein.